We begin with the raw amino-acid sequence, 176 residues long: Vitamin K epoxide reductase complex subunit 1-like protein 1 (176 aa).

Topologically, residues 1-13 (MAAPVLLRVSVPR) are cytoplasmic. Residues 14-36 (WERVARYAVCAAGILLSIYAYHV) form a helical membrane-spanning segment. The Lumenal portion of the chain corresponds to 37-87 (EREKERDPEHRALCDLGPWVKCSAALASRWGRGFGLLGSIFGKDGVLNQPN). Cysteine 50 and cysteine 58 are disulfide-bonded. Residue asparagine 87 coordinates (S)-warfarin. Residues 88–102 (SVFGLIFYILQLLLG) form a helical membrane-spanning segment. The Cytoplasmic segment spans residues 103 to 107 (MTASA). Residues 108–135 (VAALILMTSSIMSVVGSLYLAYILYFVL) traverse the membrane as a helical segment. Topologically, residues 136–138 (KEF) are lumenal. Cysteine 139 and cysteine 142 are oxidised to a cystine. A helical transmembrane segment spans residues 139–160 (CIICIVTYVLNFLLLIINYKRL). The phylloquinone site is built by cysteine 142 and tyrosine 146. Tyrosine 146 contacts (S)-warfarin. Over 161–176 (VYLNEAWKRQLQPKQD) the chain is Cytoplasmic.

This sequence belongs to the VKOR family.

Its subcellular location is the endoplasmic reticulum membrane. The enzyme catalyses phylloquinone + [protein]-disulfide + H2O = 2,3-epoxyphylloquinone + [protein]-dithiol. It catalyses the reaction phylloquinol + [protein]-disulfide = phylloquinone + [protein]-dithiol. Its activity is regulated as follows. Inhibited by warfarin (coumadin). Warfarin locks VKORC1 in both redox states into the closed conformation. In terms of biological role, involved in vitamin K metabolism. Can reduce inactive vitamin K 2,3-epoxide to active vitamin K, and may contribute to vitamin K-mediated protection against oxidative stress. Plays a role in vitamin K-dependent gamma-carboxylation of Glu residues in target proteins. The polypeptide is Vitamin K epoxide reductase complex subunit 1-like protein 1 (VKORC1L1) (Homo sapiens (Human)).